The primary structure comprises 235 residues: MTFDPPLVAATLVRRYKRFLFDAVLEDGSDITGFCANTGSMRGLTTPGSRIYLSQSDRPGRKYRYGFELIEADGTLVGVNTSLPNRLAHEAIRAGLVSDLLHYPQIRTEQRYGENSRIDLLLSGSGKADCYVEVKNVHFIRETGLAEFPDSVTTRGAKHLTEMAKLVAAGKRAAMLYVIQRQDCDALAICADLDPVYGRAFTAAISQGVEAYAVKCAITPRGIIPACGVPVRLTV.

Belongs to the SfsA family.

The sequence is that of Sugar fermentation stimulation protein homolog from Allorhizobium ampelinum (strain ATCC BAA-846 / DSM 112012 / S4) (Agrobacterium vitis (strain S4)).